Here is an 84-residue protein sequence, read N- to C-terminus: U4-theraphotoxin-Hhn1b (84 aa).

The signal sequence occupies residues 1–22 (MKVTLTAILTCAAVLVLHTTAA). Positions 23–47 (EELEESQLMEVGMPDTELAAVDEER) are excised as a propeptide. Disulfide bonds link C51-C65, C55-C76, and C70-C81.

The protein belongs to the neurotoxin 12 (Hwtx-2) family. 02 (Hwtx-2) subfamily. In terms of tissue distribution, expressed by the venom gland.

Its subcellular location is the secreted. Postsynaptic neurotoxin. The chain is U4-theraphotoxin-Hhn1b from Cyriopagopus hainanus (Chinese bird spider).